Here is a 536-residue protein sequence, read N- to C-terminus: Chaperonin GroEL 2 (536 aa).

Residues 29 to 32 (TLGP), 86 to 90 (DGTTT), glycine 412, and aspartate 495 each bind ATP.

Belongs to the chaperonin (HSP60) family. In terms of assembly, forms a cylinder of 14 subunits composed of two heptameric rings stacked back-to-back. Interacts with the co-chaperonin GroES.

It localises to the cytoplasm. The enzyme catalyses ATP + H2O + a folded polypeptide = ADP + phosphate + an unfolded polypeptide.. Functionally, together with its co-chaperonin GroES, plays an essential role in assisting protein folding. The GroEL-GroES system forms a nano-cage that allows encapsulation of the non-native substrate proteins and provides a physical environment optimized to promote and accelerate protein folding. This Arthrobacter sp. (strain FB24) protein is Chaperonin GroEL 2.